Consider the following 129-residue polypeptide: Glycine cleavage system H protein (129 aa).

Residues 24–106 (LVRVGISAFA…HGEGWLLVLR (83 aa)) form the Lipoyl-binding domain. The residue at position 65 (Lys-65) is an N6-lipoyllysine.

It belongs to the GcvH family. In terms of assembly, the glycine cleavage system is composed of four proteins: P, T, L and H. The cofactor is (R)-lipoate.

In terms of biological role, the glycine cleavage system catalyzes the degradation of glycine. The H protein shuttles the methylamine group of glycine from the P protein to the T protein. In Parasynechococcus marenigrum (strain WH8102), this protein is Glycine cleavage system H protein.